Consider the following 299-residue polypeptide: uncharacterized protein (299 aa).

This is an uncharacterized protein from Escherichia coli (strain K12).